The sequence spans 380 residues: Cytochrome b (380 aa).

Transmembrane regions (helical) follow at residues 33–53 (FGSL…FLAM), 77–98 (WLIR…YLHV), 113–133 (WNIG…GYVL), and 178–198 (FFAF…LHLL). Heme b-binding residues include H83 and H97. Heme b is bound by residues H182 and H196. An a ubiquinone-binding site is contributed by H201. 4 helical membrane-spanning segments follow: residues 226–246 (YKDI…ALFS), 288–308 (LGGV…PILH), 320–340 (FSQF…WIGG), and 347–367 (FIII…LLIP).

The protein belongs to the cytochrome b family. The cytochrome bc1 complex contains 3 respiratory subunits (MT-CYB, CYC1 and UQCRFS1), 2 core proteins (UQCRC1 and UQCRC2) and probably 6 low-molecular weight proteins. It depends on heme b as a cofactor.

It is found in the mitochondrion inner membrane. In terms of biological role, component of the ubiquinol-cytochrome c reductase complex (complex III or cytochrome b-c1 complex) that is part of the mitochondrial respiratory chain. The b-c1 complex mediates electron transfer from ubiquinol to cytochrome c. Contributes to the generation of a proton gradient across the mitochondrial membrane that is then used for ATP synthesis. The polypeptide is Cytochrome b (mt-cyb) (Arapaima gigas (Arapaima)).